We begin with the raw amino-acid sequence, 133 residues long: Lymphocyte antigen 6 complex locus protein G6d (133 aa).

The first 19 residues, 1-19 (MKPQFVGILLSSLLGAALG), serve as a signal peptide directing secretion. One can recognise a UPAR/Ly6 domain in the interval 22–116 (MRCYNCGGSP…ASHVAPAGIL (95 aa)). Cysteines 27 and 35 form a disulfide. O-linked (GalNAc...) threonine glycosylation is found at threonine 40 and threonine 41. 2 cysteine pairs are disulfide-bonded: cysteine 42/cysteine 71 and cysteine 77/cysteine 96. Residue serine 104 is the site of GPI-anchor amidated serine attachment. The propeptide at 105–133 (AVASHVAPAGILAAAATALTCLLPGLWSG) is removed in mature form.

Homodimer. In terms of processing, O-glycosylated. Expressed in the adult lung, and in fetal liver, lung, kidney, brain and spleen.

Its subcellular location is the cell membrane. It is found in the cell projection. It localises to the filopodium. The protein is Lymphocyte antigen 6 complex locus protein G6d (LY6G6D) of Homo sapiens (Human).